The following is a 278-amino-acid chain: MMKINSYAKINLSLDVLDLREDGYHNIDTIMNLIDLHDVIEINRNNTNELKLSSNNSNFPTDKTNLIYKIFENLKKFRKINCSYDVFVDKQIPISAGLAGGSSNACEFLMYVNDDLSLNLSNQEIKEICRLTGADTFYFTSKKCVRATGIGNEFVRLSDFSNKNIIIVNNGMSISSKDVYDNLKESNGGLGKITVAIDSRDYETFYRKAFNTMESVSERLVEEISDIKEQLNNLGCDLSLMSGSGPTVFGIFENYNDYENCYSKLKDKYKYVFKTKTL.

The active site involves Lys-9. An ATP-binding site is contributed by 93 to 103; that stretch reads PISAGLAGGSS. Asp-135 is an active-site residue.

It belongs to the GHMP kinase family. IspE subfamily.

It catalyses the reaction 4-CDP-2-C-methyl-D-erythritol + ATP = 4-CDP-2-C-methyl-D-erythritol 2-phosphate + ADP + H(+). The protein operates within isoprenoid biosynthesis; isopentenyl diphosphate biosynthesis via DXP pathway; isopentenyl diphosphate from 1-deoxy-D-xylulose 5-phosphate: step 3/6. Catalyzes the phosphorylation of the position 2 hydroxy group of 4-diphosphocytidyl-2C-methyl-D-erythritol. This is 4-diphosphocytidyl-2-C-methyl-D-erythritol kinase from Finegoldia magna (strain ATCC 29328 / DSM 20472 / WAL 2508) (Peptostreptococcus magnus).